Here is a 639-residue protein sequence, read N- to C-terminus: Cystathionine gamma-synthase (639 aa).

Lys443 bears the N6-(pyridoxal phosphate)lysine mark.

The protein belongs to the trans-sulfuration enzymes family. MET7 subfamily. The cofactor is pyridoxal 5'-phosphate.

It localises to the cytoplasm. The protein resides in the nucleus. The catalysed reaction is O-succinyl-L-homoserine + L-cysteine = L,L-cystathionine + succinate + H(+). It participates in amino-acid biosynthesis; L-methionine biosynthesis via de novo pathway; L-cystathionine from O-succinyl-L-homoserine: step 1/1. Its function is as follows. Catalyzes the formation of L-cystathionine from O-succinyl-L-homoserine (OSHS) and L-cysteine, via a gamma-replacement reaction. In the absence of thiol, catalyzes gamma-elimination to form 2-oxobutanoate, succinate and ammonia. In Saccharomyces cerevisiae (strain ATCC 204508 / S288c) (Baker's yeast), this protein is Cystathionine gamma-synthase.